The chain runs to 385 residues: Outer membrane porin protein BP0840 (385 aa).

A signal peptide spans 1–20 (MKKTLLAAALLAGFAGAAQA).

This sequence to bacterial outer membrane proteins and porins. In terms of assembly, homotrimer.

The protein resides in the cell outer membrane. In terms of biological role, forms anion selective channels. This Bordetella pertussis (strain Tohama I / ATCC BAA-589 / NCTC 13251) protein is Outer membrane porin protein BP0840.